The following is a 552-amino-acid chain: Urocanate hydratase (552 aa).

NAD(+) is bound by residues 49–50 (GG), Gln127, 173–175 (GMG), Asp193, 239–240 (NA), 260–264 (QTSAH), 270–271 (YI), and Tyr319. Residue Cys407 is part of the active site. Gly489 provides a ligand contact to NAD(+).

The protein belongs to the urocanase family. Requires NAD(+) as cofactor.

The protein resides in the cytoplasm. The enzyme catalyses 4-imidazolone-5-propanoate = trans-urocanate + H2O. The protein operates within amino-acid degradation; L-histidine degradation into L-glutamate; N-formimidoyl-L-glutamate from L-histidine: step 2/3. Catalyzes the conversion of urocanate to 4-imidazolone-5-propionate. This is Urocanate hydratase from Bacillus anthracis (strain CDC 684 / NRRL 3495).